Consider the following 127-residue polypeptide: Large ribosomal subunit protein uL22c (127 aa).

The protein belongs to the universal ribosomal protein uL22 family. As to quaternary structure, part of the 50S ribosomal subunit.

The protein resides in the plastid. The protein localises to the chloroplast. Its function is as follows. This protein binds specifically to 23S rRNA. Functionally, the globular domain of the protein is located near the polypeptide exit tunnel on the outside of the subunit, while an extended beta-hairpin is found that lines the wall of the exit tunnel in the center of the 70S ribosome. This chain is Large ribosomal subunit protein uL22c (rpl22), found in Acorus calamus var. americanus (American sweet flag).